Here is a 423-residue protein sequence, read N- to C-terminus: Putative competence-damage inducible protein (423 aa).

The protein belongs to the CinA family.

The chain is Putative competence-damage inducible protein from Streptococcus pyogenes serotype M3 (strain ATCC BAA-595 / MGAS315).